We begin with the raw amino-acid sequence, 274 residues long: Ribosomal RNA small subunit methyltransferase A (274 aa).

6 residues coordinate S-adenosyl-L-methionine: His15, Leu17, Gly42, Glu64, Asp89, and Asn109.

Belongs to the class I-like SAM-binding methyltransferase superfamily. rRNA adenine N(6)-methyltransferase family. RsmA subfamily.

It is found in the cytoplasm. The enzyme catalyses adenosine(1518)/adenosine(1519) in 16S rRNA + 4 S-adenosyl-L-methionine = N(6)-dimethyladenosine(1518)/N(6)-dimethyladenosine(1519) in 16S rRNA + 4 S-adenosyl-L-homocysteine + 4 H(+). Specifically dimethylates two adjacent adenosines (A1518 and A1519) in the loop of a conserved hairpin near the 3'-end of 16S rRNA in the 30S particle. May play a critical role in biogenesis of 30S subunits. The protein is Ribosomal RNA small subunit methyltransferase A of Synechococcus sp. (strain CC9902).